Reading from the N-terminus, the 86-residue chain is V-type proton ATPase subunit e (86 aa).

Residues 1 to 21 traverse the membrane as a helical segment; that stretch reads MGILIPLVSVSAFWAIIGFGG. Over 22–32 the chain is Cytoplasmic; sequence PWIVPKGPNRG. A helical transmembrane segment spans residues 33 to 53; the sequence is IIQLMIIMTAVCCWMFWIMVF. Topologically, residues 54–86 are lumenal; that stretch reads LHQLNPLIGPQINVKTIRWISEKWGDAPNVINN.

This sequence belongs to the V-ATPase e1/e2 subunit family. As to quaternary structure, V-ATPase is a heteromultimeric enzyme made up of two complexes: the ATP-hydrolytic V1 complex and the proton translocation V0 complex. The V1 complex consists of three catalytic AB heterodimers that form a heterohexamer, three peripheral stalks each consisting of EG heterodimers, one central rotor including subunits D and F, and the regulatory subunits C and H. The proton translocation complex V0 consists of the proton transport subunit a, a ring of proteolipid subunits c9c'', rotary subunit d, subunits e and f, and the accessory subunits vah-19/Ac45 and vah-20/PRR.

The protein localises to the apical cell membrane. Its function is as follows. Subunit of the V0 complex of vacuolar(H+)-ATPase (V-ATPase), a multisubunit enzyme composed of a peripheral complex (V1) that hydrolyzes ATP and a membrane integral complex (V0) that translocates protons. V-ATPase is responsible for acidifying and maintaining the pH of intracellular compartments and in some cell types, is targeted to the plasma membrane, where it is responsible for acidifying the extracellular environment. During embryonic development, the V-ATPase is required to repress fusion of epidermal cells probably by negatively regulating eff-1-mediated cell fusion. The chain is V-type proton ATPase subunit e from Caenorhabditis elegans.